The following is a 376-amino-acid chain: Erythronate-4-phosphate dehydrogenase (376 aa).

Substrate is bound by residues Ser-45 and Thr-67. Residue Asp-147 participates in NAD(+) binding. Arg-209 is an active-site residue. Asp-233 contacts NAD(+). Glu-238 is a catalytic residue. The active-site Proton donor is His-255. Gly-258 is a binding site for NAD(+). Tyr-259 serves as a coordination point for substrate.

The protein belongs to the D-isomer specific 2-hydroxyacid dehydrogenase family. PdxB subfamily. In terms of assembly, homodimer.

Its subcellular location is the cytoplasm. The catalysed reaction is 4-phospho-D-erythronate + NAD(+) = (R)-3-hydroxy-2-oxo-4-phosphooxybutanoate + NADH + H(+). It participates in cofactor biosynthesis; pyridoxine 5'-phosphate biosynthesis; pyridoxine 5'-phosphate from D-erythrose 4-phosphate: step 2/5. In terms of biological role, catalyzes the oxidation of erythronate-4-phosphate to 3-hydroxy-2-oxo-4-phosphonooxybutanoate. The sequence is that of Erythronate-4-phosphate dehydrogenase from Shewanella baltica (strain OS155 / ATCC BAA-1091).